The primary structure comprises 421 residues: Phosphoribosylamine--glycine ligase (421 aa).

Positions 108 to 314 constitute an ATP-grasp domain; it reads KEIMVKYNVP…FAQNIDDIMM (207 aa). Position 134 to 195 (134 to 195) interacts with ATP; sequence IEEQGAPIVV…EEFLDGEEFS (62 aa). The Mg(2+) site is built by Glu284 and Asn286.

The protein belongs to the GARS family. It depends on Mg(2+) as a cofactor. Mn(2+) is required as a cofactor.

The enzyme catalyses 5-phospho-beta-D-ribosylamine + glycine + ATP = N(1)-(5-phospho-beta-D-ribosyl)glycinamide + ADP + phosphate + H(+). Its pathway is purine metabolism; IMP biosynthesis via de novo pathway; N(1)-(5-phospho-D-ribosyl)glycinamide from 5-phospho-alpha-D-ribose 1-diphosphate: step 2/2. This chain is Phosphoribosylamine--glycine ligase, found in Streptococcus pyogenes serotype M3 (strain SSI-1).